We begin with the raw amino-acid sequence, 159 residues long: Ribosomal RNA large subunit methyltransferase H (159 aa).

The S-adenosyl-L-methionine site is built by leucine 76 and glycine 108.

This sequence belongs to the RNA methyltransferase RlmH family. As to quaternary structure, homodimer.

The protein localises to the cytoplasm. It catalyses the reaction pseudouridine(1915) in 23S rRNA + S-adenosyl-L-methionine = N(3)-methylpseudouridine(1915) in 23S rRNA + S-adenosyl-L-homocysteine + H(+). Its function is as follows. Specifically methylates the pseudouridine at position 1915 (m3Psi1915) in 23S rRNA. The sequence is that of Ribosomal RNA large subunit methyltransferase H from Limosilactobacillus fermentum (strain NBRC 3956 / LMG 18251) (Lactobacillus fermentum).